A 224-amino-acid polypeptide reads, in one-letter code: Zinc finger protein 22 (224 aa).

A disordered region spans residues 1–34 (MRLAKPKAGISRSSSQGKAYENKRKTGRQRQKWG). An N6-acetyllysine mark is found at lysine 18 and lysine 23. Serine 49 is modified (phosphoserine). 5 C2H2-type zinc fingers span residues 55–77 (YKCT…QKIH), 83–105 (HKCA…RRIH), 111–133 (YKCD…QRIH), 139–161 (YQCD…QRTH), and 167–189 (YQCS…MKVH).

It belongs to the krueppel C2H2-type zinc-finger protein family. In the embryo, expressed in developing craniofacial structures including dental epithelium of maxillary molar tooth organs, tongue epithelium and muscle, and craniofacial bone osteoblasts. In the adult, expressed in mesoderm-derived tissues such as skeletal muscle, heart, kidney and liver. Intermediate expression in spleen, thymus and brain. Low levels in endoderm-derived tissues such as intestine and colon.

The protein localises to the nucleus. In terms of biological role, binds DNA through the consensus sequence 5'-CAATG-3'. May be involved in transcriptional regulation and may play a role in tooth formation. In Homo sapiens (Human), this protein is Zinc finger protein 22 (ZNF22).